Consider the following 449-residue polypeptide: Elongation factor 1-alpha C (449 aa).

The tr-type G domain maps to 5-234 (KQHVSIVVIG…DACDPPKRPV (230 aa)). Residues 14–21 (GHVDSGKS) are G1. Residue 14-21 (GHVDSGKS) coordinates GTP. K55 carries the post-translational modification N6,N6-dimethyllysine. Positions 70–74 (GITID) are G2. Residue K79 is modified to N6,N6,N6-trimethyllysine. Residues 91 to 94 (DAPG) form a G3 region. GTP-binding positions include 91–95 (DAPGH) and 153–156 (NKMD). Positions 153 to 156 (NKMD) are G4. K187 carries the N6,N6,N6-trimethyllysine modification. The G5 stretch occupies residues 194 to 196 (SGW). An N6-methyllysine modification is found at K265. K310 and K400 each carry N6,N6,N6-trimethyllysine.

The protein belongs to the TRAFAC class translation factor GTPase superfamily. Classic translation factor GTPase family. EF-Tu/EF-1A subfamily.

The protein localises to the cytoplasm. In terms of biological role, this protein promotes the GTP-dependent binding of aminoacyl-tRNA to the A-site of ribosomes during protein biosynthesis. This is Elongation factor 1-alpha C (TEF-C) from Porphyra purpurea (Red seaweed).